The following is a 453-amino-acid chain: ATP-dependent protease ATPase subunit HslU (453 aa).

ATP-binding positions include Ile-18, 60-65 (GVGKTE), Asp-266, Glu-331, and Arg-403.

It belongs to the ClpX chaperone family. HslU subfamily. A double ring-shaped homohexamer of HslV is capped on each side by a ring-shaped HslU homohexamer. The assembly of the HslU/HslV complex is dependent on binding of ATP.

The protein localises to the cytoplasm. ATPase subunit of a proteasome-like degradation complex; this subunit has chaperone activity. The binding of ATP and its subsequent hydrolysis by HslU are essential for unfolding of protein substrates subsequently hydrolyzed by HslV. HslU recognizes the N-terminal part of its protein substrates and unfolds these before they are guided to HslV for hydrolysis. The protein is ATP-dependent protease ATPase subunit HslU of Desulforapulum autotrophicum (strain ATCC 43914 / DSM 3382 / VKM B-1955 / HRM2) (Desulfobacterium autotrophicum).